Reading from the N-terminus, the 300-residue chain is Formyltetrahydrofolate deformylase (300 aa).

An ACT domain is found at 21–102; sequence RLLVSCPDQP…MTWSLTLASE (82 aa). Asp244 is an active-site residue.

It belongs to the PurU family.

The enzyme catalyses (6R)-10-formyltetrahydrofolate + H2O = (6S)-5,6,7,8-tetrahydrofolate + formate + H(+). Its pathway is purine metabolism; IMP biosynthesis via de novo pathway; formate from 10-formyl-5,6,7,8-tetrahydrofolate: step 1/1. Functionally, catalyzes the hydrolysis of 10-formyltetrahydrofolate (formyl-FH4) to formate and tetrahydrofolate (FH4). The protein is Formyltetrahydrofolate deformylase of Bacillus subtilis (strain 168).